The primary structure comprises 319 residues: Acetyl-coenzyme A carboxylase carboxyl transferase subunit alpha (319 aa).

Residues 35–296 (NIDEEVHRLR…KAQLLADLAD (262 aa)) enclose the CoA carboxyltransferase C-terminal domain.

It belongs to the AccA family. Acetyl-CoA carboxylase is a heterohexamer composed of biotin carboxyl carrier protein (AccB), biotin carboxylase (AccC) and two subunits each of ACCase subunit alpha (AccA) and ACCase subunit beta (AccD).

It is found in the cytoplasm. It catalyses the reaction N(6)-carboxybiotinyl-L-lysyl-[protein] + acetyl-CoA = N(6)-biotinyl-L-lysyl-[protein] + malonyl-CoA. Its pathway is lipid metabolism; malonyl-CoA biosynthesis; malonyl-CoA from acetyl-CoA: step 1/1. Functionally, component of the acetyl coenzyme A carboxylase (ACC) complex. First, biotin carboxylase catalyzes the carboxylation of biotin on its carrier protein (BCCP) and then the CO(2) group is transferred by the carboxyltransferase to acetyl-CoA to form malonyl-CoA. The protein is Acetyl-coenzyme A carboxylase carboxyl transferase subunit alpha of Klebsiella pneumoniae subsp. pneumoniae (strain ATCC 700721 / MGH 78578).